Reading from the N-terminus, the 307-residue chain is ADP,ATP carrier protein 3 (307 aa).

Solcar repeat units follow at residues threonine 10–methionine 103, lysine 114–leucine 206, and glycine 214–isoleucine 300. The next 5 helical transmembrane spans lie at phenylalanine 12–leucine 39, threonine 80–phenylalanine 104, tyrosine 112–leucine 132, phenylalanine 182–leucine 203, and leucine 217–leucine 237. Residues arginine 85 and lysine 97 each coordinate ADP. Position 241 (arginine 241) interacts with ADP. An important for transport activity region spans residues arginine 241 to methionine 246. The short motif at arginine 241 to methionine 246 is the Nucleotide carrier signature motif element. Residues cysteine 277–leucine 297 form a helical membrane-spanning segment.

The protein belongs to the mitochondrial carrier (TC 2.A.29) family. In terms of assembly, monomer.

The protein resides in the mitochondrion inner membrane. The catalysed reaction is ADP(in) + ATP(out) = ADP(out) + ATP(in). Its activity is regulated as follows. The matrix-open state (m-state) is inhibited by the membrane-permeable bongkrekic acid (BKA). The cytoplasmic-open state (c-state) is inhibited by the membrane-impermeable toxic inhibitor carboxyatractyloside (CATR). Functionally, ADP:ATP antiporter that mediates import of ADP into the mitochondrial matrix for ATP synthesis, and export of ATP out to fuel the cell. Cycles between the cytoplasmic-open state (c-state) and the matrix-open state (m-state): operates by the alternating access mechanism with a single substrate-binding site intermittently exposed to either the cytosolic (c-state) or matrix (m-state) side of the inner mitochondrial membrane. This Saccharomyces cerevisiae (strain ATCC 204508 / S288c) (Baker's yeast) protein is ADP,ATP carrier protein 3 (AAC3).